A 177-amino-acid polypeptide reads, in one-letter code: Large ribosomal subunit protein uL6 (177 aa).

This sequence belongs to the universal ribosomal protein uL6 family. As to quaternary structure, part of the 50S ribosomal subunit.

Functionally, this protein binds to the 23S rRNA, and is important in its secondary structure. It is located near the subunit interface in the base of the L7/L12 stalk, and near the tRNA binding site of the peptidyltransferase center. The protein is Large ribosomal subunit protein uL6 of Vibrio parahaemolyticus serotype O3:K6 (strain RIMD 2210633).